Reading from the N-terminus, the 394-residue chain is Phosphoglycerate kinase (394 aa).

Residues 21 to 23, Arg36, 59 to 62, Arg118, and Arg151 contribute to the substrate site; these read DFN and HLGR. ATP is bound by residues Lys202, Gly293, Glu324, and 350–353; that span reads GGDS.

It belongs to the phosphoglycerate kinase family. As to quaternary structure, monomer.

The protein localises to the cytoplasm. The enzyme catalyses (2R)-3-phosphoglycerate + ATP = (2R)-3-phospho-glyceroyl phosphate + ADP. Its pathway is carbohydrate degradation; glycolysis; pyruvate from D-glyceraldehyde 3-phosphate: step 2/5. The protein is Phosphoglycerate kinase of Exiguobacterium sp. (strain ATCC BAA-1283 / AT1b).